The chain runs to 387 residues: Methyltransferase phomM (387 aa).

Residues 98–223 are methyltransferase domain; that stretch reads PHRPKDLHIL…QSVADLFTTL (126 aa).

Belongs to the class I-like SAM-binding methyltransferase superfamily. Erg6/SMT family.

The protein operates within mycotoxin biosynthesis. Its function is as follows. Methyltransferase; part of the gene cluster that mediates the biosynthesis of the phomopsins, a group of hexapeptide mycotoxins which infects lupins and causes lupinosis disease in livestock. Within the pathway, phomM acts as an S-adenosylmethionine-dependent alpha-N-methyltransferase that catalyzes two successive N-methylation reactions, converting N-desmethyl-phomopsin A to phomopsin A and phomopsin A further to an N,N-dimethylated congener called phomopsin E. The pathway starts with the processing of the precursor phomA by several endopeptidases including kexin proteases as well as the cluster-specific S41 family peptidase phomP1 and the oligopeptidase phomG to produce 10 identical copies of the hexapeptide Tyr-Val-Ile-Pro-Ile-Asp. After being excised from the precursor peptide, the core peptides are cyclized and modified post-translationally by enzymes encoded within the gene cluster. The timing and order of proteolysis of the phomA precursor and PTMs are still unknown. Two tyrosinase-like enzymes, phomQ1 and phomQ2, catalyze the chlorination and hydroxylation of Tyr, respectively. PhomYb, is proposed to be involved in the construction of the macrocyclic structure. The other 4 ustYa family proteins may be involved in PTMs that generate the unique structure of phomopsin A. PhomYa is required for the hydroxylation of C-beta of Tyr. PhomYc, phomYd, and phomYe are responsible for the biosynthesis of 2,3-dehydroisoleucine (dIle), 2,3-dehydroaspartic acid (dAsp), and 3,4-dehydroproline (dPro), respectively. While dIle formation by phomYc is indispensable for the installation of dAsp by phomYd, the order of the other PTMs have not been elucidated yet. Most of the biosynthetic enzymes likely have broad substrate specificity, and thus, there might be a metabolic grid from a precursor to phomopsin A. The enzyme(s) responsible for the biosynthesis of 3,4-dehydrovaline (dVal) have also not been identified yet. Finally, phomM acts as an S-adenosylmethionine-dependent alpha-N-methyltransferase that catalyzes two successive N-methylation reactions, converting N-desmethyl-phomopsin A to phomopsin A and phomopsin A further to an N,N-dimethylated congener called phomopsin E. The polypeptide is Methyltransferase phomM (Diaporthe leptostromiformis (Lupinosis disease fungus)).